We begin with the raw amino-acid sequence, 340 residues long: Aspartate-semialdehyde dehydrogenase (340 aa).

NADP(+)-binding positions include 11 to 14 and 39 to 40; these read TGEV and RS. Arg100 contacts phosphate. Cys131 functions as the Acyl-thioester intermediate in the catalytic mechanism. Residue Gln158 coordinates substrate. 161–162 lines the NADP(+) pocket; that stretch reads SG. Lys216 is a binding site for phosphate. Substrate is bound at residue Arg238. His245 (proton acceptor) is an active-site residue. Asn318 provides a ligand contact to NADP(+).

Belongs to the aspartate-semialdehyde dehydrogenase family. Homodimer.

The catalysed reaction is L-aspartate 4-semialdehyde + phosphate + NADP(+) = 4-phospho-L-aspartate + NADPH + H(+). It participates in amino-acid biosynthesis; L-lysine biosynthesis via DAP pathway; (S)-tetrahydrodipicolinate from L-aspartate: step 2/4. The protein operates within amino-acid biosynthesis; L-methionine biosynthesis via de novo pathway; L-homoserine from L-aspartate: step 2/3. It functions in the pathway amino-acid biosynthesis; L-threonine biosynthesis; L-threonine from L-aspartate: step 2/5. Functionally, catalyzes the NADPH-dependent formation of L-aspartate-semialdehyde (L-ASA) by the reductive dephosphorylation of L-aspartyl-4-phosphate. The sequence is that of Aspartate-semialdehyde dehydrogenase from Aquifex aeolicus (strain VF5).